Consider the following 127-residue polypeptide: MFRTMMRAKLHRATVTEANLNYVGSITIDEDLMDAVEIVENEKVQVVNNNNGERLETYVIKGERGSGVICLNGAAARLVQPGDKVIIICYGLVSAEEVYKQIPKIAVLDDRNQIIEMLSAEKAGTEV.

The active-site Schiff-base intermediate with substrate; via pyruvic acid is the serine 25. Pyruvic acid (Ser) is present on serine 25. Threonine 57 contacts substrate. The active-site Proton donor is tyrosine 58. 73 to 75 (GAA) provides a ligand contact to substrate.

Belongs to the PanD family. In terms of assembly, heterooctamer of four alpha and four beta subunits. Pyruvate is required as a cofactor. Post-translationally, is synthesized initially as an inactive proenzyme, which is activated by self-cleavage at a specific serine bond to produce a beta-subunit with a hydroxyl group at its C-terminus and an alpha-subunit with a pyruvoyl group at its N-terminus.

The protein resides in the cytoplasm. It carries out the reaction L-aspartate + H(+) = beta-alanine + CO2. Its pathway is cofactor biosynthesis; (R)-pantothenate biosynthesis; beta-alanine from L-aspartate: step 1/1. Its function is as follows. Catalyzes the pyruvoyl-dependent decarboxylation of aspartate to produce beta-alanine. This chain is Aspartate 1-decarboxylase, found in Bacillus cytotoxicus (strain DSM 22905 / CIP 110041 / 391-98 / NVH 391-98).